The following is a 378-amino-acid chain: Carbamoyl phosphate synthase small chain (378 aa).

The CPSase stretch occupies residues 1–189; the sequence is MTKPAILALA…DSHPTIDAAD (189 aa). Residues Ser-47, Gly-241, and Gly-243 each coordinate L-glutamine. The Glutamine amidotransferase type-1 domain maps to 193–378; the sequence is HVVAFDYGVK…RFTDAMAKRR (186 aa). Cys-269 functions as the Nucleophile in the catalytic mechanism. Leu-270, Gln-273, Asn-311, Gly-313, and Phe-314 together coordinate L-glutamine. Catalysis depends on residues His-353 and Glu-355.

It belongs to the CarA family. In terms of assembly, composed of two chains; the small (or glutamine) chain promotes the hydrolysis of glutamine to ammonia, which is used by the large (or ammonia) chain to synthesize carbamoyl phosphate. Tetramer of heterodimers (alpha,beta)4.

The enzyme catalyses hydrogencarbonate + L-glutamine + 2 ATP + H2O = carbamoyl phosphate + L-glutamate + 2 ADP + phosphate + 2 H(+). It carries out the reaction L-glutamine + H2O = L-glutamate + NH4(+). Its pathway is amino-acid biosynthesis; L-arginine biosynthesis; carbamoyl phosphate from bicarbonate: step 1/1. The protein operates within pyrimidine metabolism; UMP biosynthesis via de novo pathway; (S)-dihydroorotate from bicarbonate: step 1/3. Functionally, small subunit of the glutamine-dependent carbamoyl phosphate synthetase (CPSase). CPSase catalyzes the formation of carbamoyl phosphate from the ammonia moiety of glutamine, carbonate, and phosphate donated by ATP, constituting the first step of 2 biosynthetic pathways, one leading to arginine and/or urea and the other to pyrimidine nucleotides. The small subunit (glutamine amidotransferase) binds and cleaves glutamine to supply the large subunit with the substrate ammonia. The chain is Carbamoyl phosphate synthase small chain from Pseudomonas putida (strain ATCC 47054 / DSM 6125 / CFBP 8728 / NCIMB 11950 / KT2440).